We begin with the raw amino-acid sequence, 379 residues long: Alcohol dehydrogenase class-P (379 aa).

Position 2 is an N-acetylserine (Ser-2). Cys-47 contacts Zn(2+). Thr-49 contributes to the an alcohol binding site. Thr-49 is an NAD(+) binding site. Zn(2+)-binding residues include Asp-50, His-69, Glu-70, Cys-99, Cys-102, Cys-105, Cys-113, and Cys-177. His-69 serves as a coordination point for an alcohol. 2 residues coordinate NAD(+): Val-206 and Asp-226. Ser-229 is modified (phosphoserine). 7 residues coordinate NAD(+): Arg-231, Thr-272, Val-295, Val-297, Thr-320, Phe-322, and Arg-372.

The protein belongs to the zinc-containing alcohol dehydrogenase family. Class-P subfamily. Homodimer. Zn(2+) is required as a cofactor. Post-translationally, glutathionylated. As to expression, root specific. Also detected in etiolated seedlings and leaves in cold conditions.

The protein localises to the cytoplasm. The catalysed reaction is a primary alcohol + NAD(+) = an aldehyde + NADH + H(+). It carries out the reaction a secondary alcohol + NAD(+) = a ketone + NADH + H(+). The enzyme catalyses ethanol + NAD(+) = acetaldehyde + NADH + H(+). Alcohol dehydrogenase activity show inverse correlation with the decreasing availability of oxygen. Slightly repressed by thiol-modifying agents N-ethylmaleimide (NEM) and 5,5-dithio-bis-(2-nitrobenzoic acid) (DTNB), as well as by methyl methanethiosulfonate (MMTS) in a dose-dependent manner. Inhibited by hydrogen peroxide H(2)O(2). In terms of biological role, alcohol dehydrogenase catalyzing the reduction of toxic aldehydes to the corresponding alcohols. Mostly active on ethanol (EtOH), but exhibits broad substrate selectivity for primary and secondary alcohols (e.g. cinnamyl alcohol, octanol, geraniol, butanol, propyl alcohol, pentanol, isopentanol, ethylene glycol, isopropanol, methanol and tertiary butyl alcohol). Also catalyzes the reverse reaction to convert allyl alcohol to highly toxic acryl-aldehyde. Required for survival and acclimation in hypoxic conditions, especially in roots. Not able to catalyze NADH-dependent degradation of S-nitrosoglutathione (GSNO). The chain is Alcohol dehydrogenase class-P from Arabidopsis thaliana (Mouse-ear cress).